Consider the following 285-residue polypeptide: NADPH-dependent 7-cyano-7-deazaguanine reductase (285 aa).

Residue Ile-91–Ser-93 coordinates substrate. Position 93 to 94 (Ser-93 to Lys-94) interacts with NADPH. Residue Cys-193 is the Thioimide intermediate of the active site. The active-site Proton donor is Asp-200. Residue His-232–Glu-233 coordinates substrate. An NADPH-binding site is contributed by Arg-261–Gly-262.

It belongs to the GTP cyclohydrolase I family. QueF type 2 subfamily. Homodimer.

It is found in the cytoplasm. The enzyme catalyses 7-aminomethyl-7-carbaguanine + 2 NADP(+) = 7-cyano-7-deazaguanine + 2 NADPH + 3 H(+). Its pathway is tRNA modification; tRNA-queuosine biosynthesis. Catalyzes the NADPH-dependent reduction of 7-cyano-7-deazaguanine (preQ0) to 7-aminomethyl-7-deazaguanine (preQ1). The sequence is that of NADPH-dependent 7-cyano-7-deazaguanine reductase from Shewanella frigidimarina (strain NCIMB 400).